A 439-amino-acid polypeptide reads, in one-letter code: Tol-Pal system protein TolB (439 aa).

An N-terminal signal peptide occupies residues 1-24 (MRNGMRKIIAGVFIFVFLISNLYA).

Belongs to the TolB family. The Tol-Pal system is composed of five core proteins: the inner membrane proteins TolA, TolQ and TolR, the periplasmic protein TolB and the outer membrane protein Pal. They form a network linking the inner and outer membranes and the peptidoglycan layer.

The protein resides in the periplasm. In terms of biological role, part of the Tol-Pal system, which plays a role in outer membrane invagination during cell division and is important for maintaining outer membrane integrity. The protein is Tol-Pal system protein TolB of Francisella tularensis subsp. tularensis (strain FSC 198).